We begin with the raw amino-acid sequence, 272 residues long: Orotidine 5'-phosphate decarboxylase (272 aa).

Catalysis depends on K96, which acts as the Proton donor.

The protein belongs to the OMP decarboxylase family. Type 2 subfamily.

It carries out the reaction orotidine 5'-phosphate + H(+) = UMP + CO2. It participates in pyrimidine metabolism; UMP biosynthesis via de novo pathway; UMP from orotate: step 2/2. The polypeptide is Orotidine 5'-phosphate decarboxylase (Phocaeicola vulgatus (strain ATCC 8482 / DSM 1447 / JCM 5826 / CCUG 4940 / NBRC 14291 / NCTC 11154) (Bacteroides vulgatus)).